We begin with the raw amino-acid sequence, 586 residues long: Probable transporter AQR1 (586 aa).

Disordered stretches follow at residues Met-1–Ala-44 and Glu-61–Gln-82. The Extracellular segment spans residues Met-1 to Lys-99. Over residues Asn-19–Asn-40 the composition is skewed to basic and acidic residues. Residues Trp-100 to Tyr-120 traverse the membrane as a helical segment. Residues Tyr-121 to Asn-139 lie on the Cytoplasmic side of the membrane. Residues Val-140–Ala-160 traverse the membrane as a helical segment. Residues Asp-161–Arg-166 lie on the Extracellular side of the membrane. A helical membrane pass occupies residues Pro-167–Pro-187. Position 188 (Ser-188) is a topological domain, cytoplasmic. Residues Tyr-189–Ile-209 traverse the membrane as a helical segment. The Extracellular segment spans residues Ser-210 to Thr-225. Residues Phe-226 to Ala-246 form a helical membrane-spanning segment. The Cytoplasmic portion of the chain corresponds to Val-247–Arg-255. The chain crosses the membrane as a helical span at residues Ala-256–Leu-276. Residues Pro-277–Lys-334 lie on the Extracellular side of the membrane. Residues Ile-335 to Trp-355 form a helical membrane-spanning segment. Residues Thr-356–His-374 are Cytoplasmic-facing. The helical transmembrane segment at Leu-375–Phe-395 threads the bilayer. The Extracellular portion of the chain corresponds to Thr-396–Leu-433. Residues Val-434–Ile-454 traverse the membrane as a helical segment. Residues Asp-455–Arg-459 are Cytoplasmic-facing. The helical transmembrane segment at Ile-460 to Thr-480 threads the bilayer. Over Ser-481–Thr-523 the chain is Extracellular. A helical transmembrane segment spans residues Val-524–Ile-544. Residues Pro-545–Asn-586 lie on the Cytoplasmic side of the membrane.

Belongs to the major facilitator superfamily. CAR1 family.

It is found in the membrane. Probable transporter that confers resistance to short-chain monocarboxylic acids and quinidine. In Saccharomyces cerevisiae (strain ATCC 204508 / S288c) (Baker's yeast), this protein is Probable transporter AQR1 (AQR1).